Consider the following 102-residue polypeptide: Small ribosomal subunit protein uS10 (102 aa).

The protein belongs to the universal ribosomal protein uS10 family. Part of the 30S ribosomal subunit.

Its function is as follows. Involved in the binding of tRNA to the ribosomes. This Roseiflexus castenholzii (strain DSM 13941 / HLO8) protein is Small ribosomal subunit protein uS10.